The sequence spans 382 residues: Probable inactive dehydrogenase easA (382 aa).

Residues 25-27, A60, Q102, and H171 contribute to the FMN site; that span reads PMT. H171 and N174 together coordinate substrate. FMN contacts are provided by residues K223, G299, 324–325, and R325; that span reads GR. Y352 contacts substrate.

Belongs to the NADH:flavin oxidoreductase/NADH oxidase family.

Functionally, probable inactive dehydrogenase; part of the gene cluster that mediates the biosynthesis of fungal ergot alkaloid. DmaW catalyzes the first step of ergot alkaloid biosynthesis by condensing dimethylallyl diphosphate (DMAP) and tryptophan to form 4-dimethylallyl-L-tryptophan. The second step is catalyzed by the methyltransferase easF that methylates 4-dimethylallyl-L-tryptophan in the presence of S-adenosyl-L-methionine, resulting in the formation of 4-dimethylallyl-L-abrine. The catalase easC and the FAD-dependent oxidoreductase easE then transform 4-dimethylallyl-L-abrine to chanoclavine-I which is further oxidized by easD in the presence of NAD(+), resulting in the formation of chanoclavine-I aldehyde. Agroclavine dehydrogenase easG then mediates the conversion of chanoclavine-I aldehyde to agroclavine via a non-enzymatic adduct reaction: the substrate is an iminium intermediate that is formed spontaneously from chanoclavine-I aldehyde in the presence of glutathione. Further conversion of agroclavine to paspalic acid is a two-step process involving oxidation of agroclavine to elymoclavine and of elymoclavine to paspalic acid, the second step being performed by the elymoclavine oxidase cloA. However, cloA does not encode a functional enzyme indicating that C.fusiformis terminates its ergot alkaloid pathway at elymoclavine. The protein is Probable inactive dehydrogenase easA of Claviceps fusiformis (Ergot fungus).